Reading from the N-terminus, the 195-residue chain is Probable GTP-binding protein EngB (195 aa).

In terms of domain architecture, EngB-type G spans 22–195 (GLPEIALAGR…WGAIKKMINR (174 aa)). GTP contacts are provided by residues 30 to 37 (GRSNVGKS), 57 to 61 (GKTQT), 75 to 78 (DVPG), 142 to 145 (TKAD), and 174 to 176 (FSS). The Mg(2+) site is built by Ser37 and Thr59.

The protein belongs to the TRAFAC class TrmE-Era-EngA-EngB-Septin-like GTPase superfamily. EngB GTPase family. Mg(2+) is required as a cofactor.

Functionally, necessary for normal cell division and for the maintenance of normal septation. In terms of biological role, binds GTP and GDP. The protein is Probable GTP-binding protein EngB of Bacillus subtilis (strain 168).